The primary structure comprises 521 residues: MDSPSGPRVLSSLTQDPSFTTSPALQGIWNGTQNVSVRAQLLSVSPTTSAHQAAAWVPFPTVDVPDHAHYTLGTVILLVGLTGMLGNLTVIYTFCRNRGLRTPANMFIINLAVSDFLMSVTQAPVFFASSLYKKWLFGETGCEFYAFCGAVFGITSMITLTAIAMDRYLVITRPLATIGRGSKRRTALVLLGVWLYALAWSLPPFFGWSAYVPEGLLTSCSWDYMTFTPQVRAYTMLLFCFVFFLPLLIIIFCYIFIFRAIRETGRACEGCGESPLRQRRQWQRLQSEWKMAKVALIVILLFVLSWAPYSTVALVAFAGYSHILTPYMSSVPAVIAKASAIHNPIIYAITHPKYRVAIAQHLPCLGVLLGVSGQRSHPSLSYRSTHRSTLSSQSSDLSWISGRKRQESLGSESEVGWTDTETTAAWGAAQQASGQSFCSQNLEDGELKASSSPQVQRSKTPKVPGPSTCRPMKGQGARPSSLRGDQKGRLAVCTGLSECPHPHTSQFPLAFLEDDVTLRHL.

At 1 to 71 (MDSPSGPRVL…VDVPDHAHYT (71 aa)) the chain is on the extracellular side. Residues N30 and N34 are each glycosylated (N-linked (GlcNAc...) asparagine). Residues 72 to 92 (LGTVILLVGLTGMLGNLTVIY) form a helical membrane-spanning segment. At 93–106 (TFCRNRGLRTPANM) the chain is on the cytoplasmic side. Residues 107–127 (FIINLAVSDFLMSVTQAPVFF) traverse the membrane as a helical segment. At 128–143 (ASSLYKKWLFGETGCE) the chain is on the extracellular side. Cysteines 142 and 220 form a disulfide. The chain crosses the membrane as a helical span at residues 144-164 (FYAFCGAVFGITSMITLTAIA). Over 165 to 187 (MDRYLVITRPLATIGRGSKRRTA) the chain is Cytoplasmic. A helical membrane pass occupies residues 188–208 (LVLLGVWLYALAWSLPPFFGW). Residues 209–237 (SAYVPEGLLTSCSWDYMTFTPQVRAYTML) lie on the Extracellular side of the membrane. A helical transmembrane segment spans residues 238–258 (LFCFVFFLPLLIIIFCYIFIF). Over 259 to 293 (RAIRETGRACEGCGESPLRQRRQWQRLQSEWKMAK) the chain is Cytoplasmic. Residues 294 to 314 (VALIVILLFVLSWAPYSTVAL) form a helical membrane-spanning segment. Topologically, residues 315 to 329 (VAFAGYSHILTPYMS) are extracellular. Residues 330–350 (SVPAVIAKASAIHNPIIYAIT) form a helical membrane-spanning segment. The residue at position 337 (K337) is an N6-(retinylidene)lysine. Residues 351–521 (HPKYRVAIAQ…LEDDVTLRHL (171 aa)) lie on the Cytoplasmic side of the membrane. A disordered region spans residues 445-486 (GELKASSSPQVQRSKTPKVPGPSTCRPMKGQGARPSSLRGDQ). Positions 449 to 458 (ASSSPQVQRS) are enriched in polar residues.

This sequence belongs to the G-protein coupled receptor 1 family. Opsin subfamily. Expressed in the retinal pigment epithelium and ganglion cell layer (at protein level). Also expressed in amacrine cell layers of the retina. Weakly expressed in vibrissae, and tail. As to expression, observed with processes in the outer strata of inner plexiform layer (IPL) close to the inner nuclear layer (INL) or is found to be bistratified with processes located both in the inner (ON) or outer (OFF) layers of the IPL (at protein level). A second population of isoform 1 is identified in processes which are confined to the inner layer of the IPL near to the ganglion cell layer (GCL) (at protein level). In terms of tissue distribution, about 40 times more abundant than isoform 1 in the retina (at protein level). Isoform 2 is involved in processes localized to the outer IPL or is bistratified with processes in both the inner and outer layers of the IPL (at protein level). Isoform 2 is absent in the processes confined only to the inner layer of the IPL (at protein level).

The protein resides in the cell membrane. It is found in the cell projection. It localises to the axon. The protein localises to the dendrite. Its subcellular location is the perikaryon. Its function is as follows. Photoreceptor that binds cis-retinaldehydes. Contributes to pupillar reflex, photoentrainment and other non-image forming responses to light. May be involved in the optokinetic visual tracking response. May be involved in the regulation of retinal hyaloid vessel growth and regression. The chain is Melanopsin (Opn4) from Mus musculus (Mouse).